A 165-amino-acid chain; its full sequence is Large ribosomal subunit protein uL10 (165 aa).

Belongs to the universal ribosomal protein uL10 family. In terms of assembly, part of the ribosomal stalk of the 50S ribosomal subunit. The N-terminus interacts with L11 and the large rRNA to form the base of the stalk. The C-terminus forms an elongated spine to which L12 dimers bind in a sequential fashion forming a multimeric L10(L12)X complex.

Functionally, forms part of the ribosomal stalk, playing a central role in the interaction of the ribosome with GTP-bound translation factors. This Serratia proteamaculans (strain 568) protein is Large ribosomal subunit protein uL10.